A 511-amino-acid polypeptide reads, in one-letter code: ATP synthase subunit alpha (511 aa).

169–176 (GDRQTGKT) provides a ligand contact to ATP.

Belongs to the ATPase alpha/beta chains family. As to quaternary structure, F-type ATPases have 2 components, CF(1) - the catalytic core - and CF(0) - the membrane proton channel. CF(1) has five subunits: alpha(3), beta(3), gamma(1), delta(1), epsilon(1). CF(0) has three main subunits: a(1), b(2) and c(9-12). The alpha and beta chains form an alternating ring which encloses part of the gamma chain. CF(1) is attached to CF(0) by a central stalk formed by the gamma and epsilon chains, while a peripheral stalk is formed by the delta and b chains.

It is found in the cell inner membrane. It carries out the reaction ATP + H2O + 4 H(+)(in) = ADP + phosphate + 5 H(+)(out). In terms of biological role, produces ATP from ADP in the presence of a proton gradient across the membrane. The alpha chain is a regulatory subunit. The chain is ATP synthase subunit alpha from Bartonella quintana (strain Toulouse) (Rochalimaea quintana).